Here is a 130-residue protein sequence, read N- to C-terminus: Small ribosomal subunit protein uS11 (130 aa).

It belongs to the universal ribosomal protein uS11 family. In terms of assembly, part of the 30S ribosomal subunit. Interacts with proteins S7 and S18. Binds to IF-3.

Functionally, located on the platform of the 30S subunit, it bridges several disparate RNA helices of the 16S rRNA. Forms part of the Shine-Dalgarno cleft in the 70S ribosome. This Blochmanniella floridana protein is Small ribosomal subunit protein uS11.